The sequence spans 328 residues: MEGSSNSPDRQSSGGSPPEERGGGGSGGGGGRSAAGEPVRSRWTPKPEQILILESIFNSGMVNPPKDETVRIRKLLERFGAVGDANVFYWFQNRRSRSRRRQRQMQAAAAAAAAAASSSSPSANTSPAAASAATVQVGLPPGAVVHTMAMGGSACQYEQQASSSSSSGSTGGSSLGLFAHGAGASGAGGYLQASCGASASASSALAPGLMGDVVDSGGSDDLFAISRQMGFVGSPRCSPASSPATPSSAATAAQQQFYSCQLPAATITVFINGVPMEMPRGPIDLRAMFGQDVMLVHSTGALLPVNDYGILMQSLQIGESYFLVARPP.

Residues 1-11 (MEGSSNSPDRQ) are compositionally biased toward polar residues. The segment at 1 to 45 (MEGSSNSPDRQSSGGSPPEERGGGGSGGGGGRSAAGEPVRSRWTP) is disordered. Residues 23 to 33 (GGGSGGGGGRS) are compositionally biased toward gly residues. The segment at residues 38–102 (PVRSRWTPKP…NRRSRSRRRQ (65 aa)) is a DNA-binding region (homeobox; WUS-type).

It belongs to the WUS homeobox family.

It is found in the nucleus. Its function is as follows. Transcription factor which may be involved in developmental processes. The sequence is that of WUSCHEL-related homeobox 6 (WOX6) from Oryza sativa subsp. japonica (Rice).